Reading from the N-terminus, the 526-residue chain is MLO-like protein 1 (526 aa).

Topologically, residues 1-11 are extracellular; it reads MGHGGEGMSLE. Residues 12 to 32 form a helical membrane-spanning segment; it reads FTPTWVVAGVCTVIVAISLAV. Over 33 to 61 the chain is Cytoplasmic; the sequence is ERLLHYFGTVLKKKKQKPLYEALQKVKEE. The helical transmembrane segment at 62 to 82 threads the bilayer; it reads LMLLGFISLLLTVFQGLISKF. At 83–160 the chain is on the extracellular side; sequence CVKENVLMHM…LSLEALHHLH (78 aa). A helical membrane pass occupies residues 161–181; the sequence is IFIFVLAISHVTFCVLTVIFG. Over 182–287 the chain is Cytoplasmic; the sequence is STRIHQWKKW…MRALEDDFKQ (106 aa). The next 2 helical transmembrane spans lie at 288 to 308 and 309 to 329; these read VVGI…LNVN and GWHT…AVGT. Residues 330 to 372 lie on the Cytoplasmic side of the membrane; it reads KLEHVIAQLAHEVAEKHVAIEGDLVVKPSDEHFWFSKPQIVLY. The helical transmembrane segment at 373–393 threads the bilayer; the sequence is LIHFILFQNAFEIAFFFWIWV. The Extracellular portion of the chain corresponds to 394-412; sequence TYGFDSCIMGQVRYIVPRL. A helical transmembrane segment spans residues 413–433; sequence VIGVFIQVLCSYSTLPLYAIV. The Cytoplasmic segment spans residues 434–526; that stretch reads SQMGSSFKKA…NNEITPDHNN (93 aa). Residues 447 to 468 form a calmodulin-binding region; that stretch reads ENVQVGLVGWAQKVKQKRDLKA. Residues 471 to 526 are disordered; the sequence is SNGDEGSSQAGPGPDSGSGSAPAAGPGAGFAGIQLSRVTRNNAGDTNNEITPDHNN. Low complexity predominate over residues 476–495; the sequence is GSSQAGPGPDSGSGSAPAAG. Positions 506–520 are enriched in polar residues; it reads SRVTRNNAGDTNNEI.

This sequence belongs to the MLO family.

The protein localises to the cell membrane. In terms of biological role, may be involved in modulation of pathogen defense and leaf cell death. Activity seems to be regulated by Ca(2+)-dependent calmodulin binding and seems not to require heterotrimeric G proteins. The protein is MLO-like protein 1 (MLO1) of Arabidopsis thaliana (Mouse-ear cress).